Reading from the N-terminus, the 287-residue chain is MAIRTFRPYTPGTRTRVVTDFNEVTGRKPERSLVVAKHRRKGRNNRGVITCRHRGGGHKRLYRIVDFRRNKHGIPAKVAAIHYDPHRNAHLALLFYTDGEKRYILAPNGIAIGQQLISGPESPIETGNALPLSAIPLGSSVHNVELYAGRGGQMARTAGSSAQVMAKEGDYVALKLPSTEVRLVRHECYATLGEVGNSEVRNTSLGKAGRRRWLGRRPQVRGSVMNPCDHPHGGGEGRAPIGRSGPVTPWGKPALGLKTRKRNKPSNRFVLRKRRRTSKRSRGGRDS.

Positions 221-287 (RGSVMNPCDH…SKRSRGGRDS (67 aa)) are disordered. Positions 258–287 (KTRKRNKPSNRFVLRKRRRTSKRSRGGRDS) are enriched in basic residues.

Belongs to the universal ribosomal protein uL2 family. Part of the 50S ribosomal subunit. Forms a bridge to the 30S subunit in the 70S ribosome.

Functionally, one of the primary rRNA binding proteins. Required for association of the 30S and 50S subunits to form the 70S ribosome, for tRNA binding and peptide bond formation. It has been suggested to have peptidyltransferase activity; this is somewhat controversial. Makes several contacts with the 16S rRNA in the 70S ribosome. This is Large ribosomal subunit protein uL2 from Prochlorococcus marinus (strain MIT 9303).